Consider the following 1328-residue polypeptide: WASH complex subunit 2 (1328 aa).

Residues 1-219 (MNRTSPDSEQ…VGSDRGSIVD (219 aa)) form a sufficient for interaction with WASHC3, WASHC4 and WASHC5; required for interaction with WASHC1 region. A phosphoserine mark is found at Ser-157, Ser-159, Ser-204, Ser-205, and Ser-209. The segment covering 201–213 (GELSSEEGSVGSD) has biased composition (low complexity). 2 disordered regions span residues 201-655 (GELS…KTNL) and 675-830 (KKTQ…PKST). Composition is skewed to acidic residues over residues 219–231 (DSED…ESDD) and 248–273 (SDEE…EDIE). Ser-283 carries the phosphoserine modification. Over residues 288–323 (LAARIKGDVSNQRKEGHTDGKPQRTVKEKKERRTPA) the composition is skewed to basic and acidic residues. Thr-321 carries the phosphothreonine modification. Residues 346–592 (SRGGLFSDRQ…QTSSLPPQSQ (247 aa)) are sufficient for interaction with CCDC93. The interval 347 to 1328 (RGGLFSDRQG…DDPLNAFGSQ (982 aa)) is interaction with VPS35. Positions 357-367 (LFDDDDESDLF) match the LFa 1 motif. Phosphoserine is present on residues Ser-384 and Ser-387. 2 consecutive short sequence motifs (LFa) follow at residues 440 to 455 (LFDD…DNFF) and 474 to 483 (IFDDDEGDLF). Residues 441-453 (FDDDDNDSDEDDN) are compositionally biased toward acidic residues. The segment covering 508 to 528 (TITLPSSKNPKLVSETKTQKG) has biased composition (polar residues). 2 consecutive short sequence motifs (LFa) follow at residues 529–540 (LFSDEEDSEDLF) and 564–575 (LFGDEDEEDNLF). 2 positions are modified to phosphoserine: Ser-531 and Ser-536. Over residues 539–556 (LFSSQSSSKTKSASVLSS) the composition is skewed to low complexity. Polar residues predominate over residues 582 to 592 (KQTSSLPPQSQ). Phosphoserine occurs at positions 610 and 611. The span at 627-638 (ASERKSKGERWD) shows a compositional bias: basic and acidic residues. 2 short sequence motifs (LFa) span residues 655-667 (LFEE…VDLF) and 683-695 (LFED…SSLF). The segment covering 690–699 (SGSSLFSLPP) has biased composition (polar residues). Ser-720, Ser-744, Ser-749, Ser-780, and Ser-795 each carry phosphoserine. Residues 797 to 808 (FDEDEDKVEDDS) show a composition bias toward acidic residues. 2 short sequence motifs (LFa) span residues 832-840 (VFQDEELLF) and 849-855 (DPDVDLF). Disordered stretches follow at residues 863–940 (LSMP…EPSS) and 991–1088 (PTLP…AMAV). 2 positions are modified to phosphoserine: Ser-867 and Ser-870. The short motif at 871–881 (LFGDDDDDDLF) is the LFa 10 element. Residues 894–919 (PEKKGTLRKDHKPPELTEGSKEKSTW) are compositionally biased toward basic and acidic residues. The interval 925–1328 (QDSSGLTPFK…DDPLNAFGSQ (404 aa)) is interaction with phospholipids. Over residues 1016–1034 (NKGRVKVRGKRRPQTRAAR) the composition is skewed to basic residues. Residues 1017 to 1035 (KGRVKVRGKRRPQTRAARR) form a required for interaction with F-actin-capping protein subunit alpha (CAPZA1 or CAPZA2 or CAPZA3) region. A phosphoserine mark is found at Ser-1042, Ser-1060, Ser-1077, and Ser-1102. The segment at 1115–1210 (AHLFDSGDIF…KKNQWKSDSH (96 aa)) is disordered. Short sequence motifs (LFa) lie at residues 1117–1124 (LFDSGDIF), 1157–1171 (VFPD…DDLF), and 1187–1195 (LLEDEEDLF). Phosphoserine occurs at positions 1162 and 1165. The span at 1196-1210 (ADQKGKKNQWKSDSH) shows a compositional bias: basic and acidic residues. 3 consecutive short sequence motifs (LFa) follow at residues 1220 to 1226 (IFEDDIF), 1249 to 1257 (LFDDNIDIF), and 1277 to 1286 (MFDDDTDDIF). The disordered stretch occupies residues 1289–1310 (GLQAKASKPKSQSAEAVSELRS). Residues 1317 to 1325 (IFDDPLNAF) carry the LFa 17 motif. Residue Ser-1327 is modified to Phosphoserine.

The protein belongs to the FAM21 family. In terms of assembly, component of the WASH core complex also described as WASH regulatory complex (SHRC) composed of WASHC1, WASHC2, WASHC3, WASHC4 and WASHC5; in the complex interacts (via N-terminus) directly with WASHC1. The WASH core complex associates with the F-actin-capping protein dimer (formed by CAPZA1, CAPZA2 or CAPZA3 and CAPZB) in a transient or substoichiometric manner which was initially described as WASH complex. Interacts with VPS35; mediates the association with the retromer CSC complex. Interacts with FKBP15. Interacts with CCDC93, CCDC22, VPS35L; indicative for an association of the WASH core complex with the CCC and retriever complexes. Directly interacts with TBC1D23.

Its subcellular location is the early endosome membrane. The protein localises to the cell membrane. In terms of biological role, acts as a component of the WASH core complex that functions as a nucleation-promoting factor (NPF) at the surface of endosomes, where it recruits and activates the Arp2/3 complex to induce actin polymerization, playing a key role in the fission of tubules that serve as transport intermediates during endosome sorting. Mediates the recruitment of the WASH core complex to endosome membranes via binding to phospholipids and VPS35 of the retromer CSC. Mediates the recruitment of the F-actin-capping protein dimer to the WASH core complex probably promoting localized F-actin polymerization needed for vesicle scission. Via its C-terminus binds various phospholipids, most strongly phosphatidylinositol 4-phosphate (PtdIns-(4)P), phosphatidylinositol 5-phosphate (PtdIns-(5)P) and phosphatidylinositol 3,5-bisphosphate (PtdIns-(3,5)P2). Involved in the endosome-to-plasma membrane trafficking and recycling of SNX27-retromer-dependent cargo proteins, such as GLUT1. Required for the association of DNAJC13, ENTR1, ANKRD50 with retromer CSC subunit VPS35. Required for the endosomal recruitment of CCC and retriever complexes subunits COMMD1 and CCDC93 as well as the retrievere complex subunit VPS35L. In Rattus norvegicus (Rat), this protein is WASH complex subunit 2.